A 478-amino-acid chain; its full sequence is Stromelysin-1 (478 aa).

An N-terminal signal peptide occupies residues Met-1–Ala-17. Residues Tyr-18–His-100 constitute a propeptide, activation peptide. Residues Pro-91–Val-98 carry the Cysteine switch motif. Residue Cys-93 coordinates Zn(2+). Ca(2+) contacts are provided by Asp-125 and Asp-159. The Zn(2+) site is built by His-169 and Asp-171. Asp-176, Gly-177, Gly-179, and Val-181 together coordinate Ca(2+). Residue His-184 coordinates Zn(2+). 3 residues coordinate Ca(2+): Gly-191, Asn-193, and Asp-195. His-197 is a Zn(2+) binding site. Positions 199, 200, and 202 each coordinate Ca(2+). His-219 serves as a coordination point for Zn(2+). Residue Glu-220 is part of the active site. Residues His-223 and His-229 each contribute to the Zn(2+) site. Hemopexin repeat units lie at residues Pro-288–Leu-337, Pro-338–Ser-384, Ile-386–Ile-434, and Asn-435–Cys-478. Cys-291 and Cys-478 form a disulfide bridge. Residue Asp-298 coordinates Ca(2+). Positions 390 and 439 each coordinate Ca(2+).

Belongs to the peptidase M10A family. Ca(2+) serves as cofactor. Zn(2+) is required as a cofactor.

The protein localises to the secreted. It is found in the extracellular space. It localises to the extracellular matrix. The catalysed reaction is Preferential cleavage where P1', P2' and P3' are hydrophobic residues.. Metalloproteinase with a rather broad substrate specificity that can degrade fibronectin, laminin, gelatins of type I, III, IV, and V; collagens III, IV, X, and IX, and cartilage proteoglycans. Activates different molecules including growth factors, plasminogen or other matrix metalloproteinases such as MMP9. Once released into the extracellular matrix (ECM), the inactive pro-enzyme is activated by the plasmin cascade signaling pathway. Also acts intracellularly. For example, in dopaminergic neurons, gets activated by the serine protease HTRA2 upon stress and plays a pivotal role in DA neuronal degeneration by mediating microglial activation and alpha-synuclein/SNCA cleavage. In addition, plays a role in immune response and possesses antiviral activity against various viruses. Mechanistically, translocates from the cytoplasm into the cell nucleus upon virus infection to influence NF-kappa-B activities. This is Stromelysin-1 (MMP3) from Oryctolagus cuniculus (Rabbit).